We begin with the raw amino-acid sequence, 1488 residues long: Chromosome partition protein MukB (1488 aa).

An ATP-binding site is contributed by 34 to 41 (GGNGAGKS). Coiled-coil stretches lie at residues 326-413 (LEAD…QTRA), 444-472 (LDTF…QTAH), and 509-602 (RHLA…RRAP). The flexible hinge stretch occupies residues 666 to 783 (PGGAEDQRLN…SLPIFGRAAR (118 aa)). Coiled coils occupy residues 835–923 (EAEI…AKLE), 977–1116 (EMLS…AKAG), and 1209–1265 (VEAI…LQSV).

It belongs to the SMC family. MukB subfamily. As to quaternary structure, homodimerization via its hinge domain. Binds to DNA via its C-terminal region. Interacts, and probably forms a ternary complex, with MukE and MukF via its C-terminal region. The complex formation is stimulated by calcium or magnesium. Interacts with tubulin-related protein FtsZ.

The protein localises to the cytoplasm. It localises to the nucleoid. Plays a central role in chromosome condensation, segregation and cell cycle progression. Functions as a homodimer, which is essential for chromosome partition. Involved in negative DNA supercoiling in vivo, and by this means organize and compact chromosomes. May achieve or facilitate chromosome segregation by condensation DNA from both sides of a centrally located replisome during cell division. The sequence is that of Chromosome partition protein MukB from Salmonella paratyphi C (strain RKS4594).